Reading from the N-terminus, the 255-residue chain is Small ribosomal subunit protein uS2 (255 aa).

The protein belongs to the universal ribosomal protein uS2 family.

This Streptococcus pyogenes serotype M49 (strain NZ131) protein is Small ribosomal subunit protein uS2.